The following is a 399-amino-acid chain: Beta sliding clamp (399 aa).

It belongs to the beta sliding clamp family. As to quaternary structure, forms a ring-shaped head-to-tail homodimer around DNA which binds and tethers DNA polymerases and other proteins to the DNA. The DNA replisome complex has a single clamp-loading complex (3 tau and 1 each of delta, delta', psi and chi subunits) which binds 3 Pol III cores (1 core on the leading strand and 2 on the lagging strand) each with a beta sliding clamp dimer. Additional proteins in the replisome are other copies of gamma, psi and chi, Ssb, DNA helicase and RNA primase.

The protein resides in the cytoplasm. Functionally, confers DNA tethering and processivity to DNA polymerases and other proteins. Acts as a clamp, forming a ring around DNA (a reaction catalyzed by the clamp-loading complex) which diffuses in an ATP-independent manner freely and bidirectionally along dsDNA. Initially characterized for its ability to contact the catalytic subunit of DNA polymerase III (Pol III), a complex, multichain enzyme responsible for most of the replicative synthesis in bacteria; Pol III exhibits 3'-5' exonuclease proofreading activity. The beta chain is required for initiation of replication as well as for processivity of DNA replication. This Mycolicibacterium paratuberculosis (strain ATCC BAA-968 / K-10) (Mycobacterium paratuberculosis) protein is Beta sliding clamp (dnaN).